The chain runs to 333 residues: Transcription factor MYB36 (333 aa).

2 consecutive HTH myb-type domains span residues 9-62 (KANV…LNYL) and 63-117 (RPNI…KKKL). 2 consecutive DNA-binding regions (H-T-H motif) follow at residues 38-62 (WIAL…LNYL) and 90-113 (WSII…NTKL). The disordered stretch occupies residues 119–150 (GRQKQMNRQDSITDSTENNLSNNNNNKSPQNL). Residues 122–135 (KQMNRQDSITDSTE) show a composition bias toward polar residues. Over residues 136-150 (NNLSNNNNNKSPQNL) the composition is skewed to low complexity.

Expressed in leaves, roots (endodermis-specific) and seedlings.

Its subcellular location is the nucleus. In terms of biological role, transcription factors that activates genes required for endodermal differentiation but represses genes involved in proliferative divisions, thus regulating the transition from proliferation to differentiation in root endodermis. Required for Casparian strip formation by positively regulating the expression of the Casparian strip genes CASP1, PER64 and ESB1 and other endodermis-specific genes, thus triggering correct localized lignin biosynthesis in root endodermis and subsequently regulating global ion homeostasis. The polypeptide is Transcription factor MYB36 (Arabidopsis thaliana (Mouse-ear cress)).